A 638-amino-acid chain; its full sequence is Actin-regulating kinase 1 (638 aa).

One can recognise a Protein kinase domain in the interval 22-298; sequence VEIIKYLTSG…VYQLLKRISI (277 aa). ATP contacts are provided by residues 28–36 and Lys56; that span reads LTSGGFAQV. Asp159 functions as the Proton acceptor in the catalytic mechanism. At Ser478 the chain carries Phosphoserine. The segment covering 482 to 515 has biased composition (polar residues); it reads YSTRGNIKKNQSVKESLTSSSLPGTSFTPTSTKV. Residues 482 to 518 form a disordered region; that stretch reads YSTRGNIKKNQSVKESLTSSSLPGTSFTPTSTKVNLK. Phosphoserine occurs at positions 522 and 535. The disordered stretch occupies residues 569 to 638; it reads SEESFNARKM…LAGRKLSLDK (70 aa). The segment covering 582–593 has biased composition (basic and acidic residues); it reads KLHEKGEIDKPT. Residues 602–615 form an interaction with SH3 domain of ABP1 region; the sequence is SKDKKTKPTPPPKP.

The protein belongs to the protein kinase superfamily. Ser/Thr protein kinase family. In terms of assembly, interacts with ABP1, which is required for proper actin patch localization.

Its subcellular location is the cytoplasm. The protein localises to the cytoskeleton. It is found in the actin patch. The enzyme catalyses L-seryl-[protein] + ATP = O-phospho-L-seryl-[protein] + ADP + H(+). The catalysed reaction is L-threonyl-[protein] + ATP = O-phospho-L-threonyl-[protein] + ADP + H(+). In terms of biological role, involved in regulation of actin cytoskeleton organization and endocytosis. The chain is Actin-regulating kinase 1 (ARK1) from Saccharomyces cerevisiae (strain ATCC 204508 / S288c) (Baker's yeast).